A 626-amino-acid chain; its full sequence is MSEETLSFQAEVSKLLDIVVHSLYSDRKIFLRELISNASDACDKLRYEGLTQPALLEGDGAFRIRLSIDAEAGTLTIADNGIGMNRHELIENLGTIARSGTQAFAEALKAKSQAASGDVSLIGQFGVGFYSAFMVADKVEVVTRRAGEAQGWRWSSDGKGSFSVSEVEGAGRGAAITLHLREDARDFLDEHRLREIVKTYSDHIAIPVDYAGKEGEPERLNEASALWTRPRDQITDEQYAEFYHHVAHGFETPWHTLHYRAEGKLEYTALLFVPGQQPFDLFTQDRKPRVKLYVNRVFITDDCEELLPSYLRFVRGVVDSSDLPLNVSREMLQDDPRLRKIKGGLTKRLIDDLAKRARDDESAYLTFWENFGAVLKEGIYEDFERKEDLVALARFRTTASDTPVSLETVIGRMKEGQSALYYITGDDATALARSPQVEGFVARGVEVLLLTDPIDEFWVSAVPKVGDTALKAVAQGSADLERLALIDGKQPPDDAEHAPAETAKMDALIAAMKAALGTAVADVRVSARLTDSPVCLVAKEGAMSLHLQKLLRQANQGSELSGDRVLEINPRHALVKTLAERAATGGSVDEAALLLMDQARILEGEAPADAIAFARRLTEVMGKGLI.

The a; substrate-binding stretch occupies residues 1–329 (MSEETLSFQA…SSDLPLNVSR (329 aa)). The segment at 330–549 (EMLQDDPRLR…EGAMSLHLQK (220 aa)) is b. The segment at 550 to 626 (LLRQANQGSE…LTEVMGKGLI (77 aa)) is c.

It belongs to the heat shock protein 90 family. In terms of assembly, homodimer.

Its subcellular location is the cytoplasm. In terms of biological role, molecular chaperone. Has ATPase activity. The protein is Chaperone protein HtpG of Rhodospirillum rubrum (strain ATCC 11170 / ATH 1.1.1 / DSM 467 / LMG 4362 / NCIMB 8255 / S1).